The following is a 492-amino-acid chain: Protein nucleotidyltransferase YdiU (492 aa).

ATP-binding residues include Gly91, Gly93, Arg94, Lys114, Asp126, Gly127, Arg177, and Arg184. Residue Asp253 is the Proton acceptor of the active site. Mg(2+)-binding residues include Asn254 and Asp263. Position 263 (Asp263) interacts with ATP.

Belongs to the SELO family. It depends on Mg(2+) as a cofactor. Mn(2+) serves as cofactor.

It carries out the reaction L-seryl-[protein] + ATP = 3-O-(5'-adenylyl)-L-seryl-[protein] + diphosphate. It catalyses the reaction L-threonyl-[protein] + ATP = 3-O-(5'-adenylyl)-L-threonyl-[protein] + diphosphate. The enzyme catalyses L-tyrosyl-[protein] + ATP = O-(5'-adenylyl)-L-tyrosyl-[protein] + diphosphate. The catalysed reaction is L-histidyl-[protein] + UTP = N(tele)-(5'-uridylyl)-L-histidyl-[protein] + diphosphate. It carries out the reaction L-seryl-[protein] + UTP = O-(5'-uridylyl)-L-seryl-[protein] + diphosphate. It catalyses the reaction L-tyrosyl-[protein] + UTP = O-(5'-uridylyl)-L-tyrosyl-[protein] + diphosphate. In terms of biological role, nucleotidyltransferase involved in the post-translational modification of proteins. It can catalyze the addition of adenosine monophosphate (AMP) or uridine monophosphate (UMP) to a protein, resulting in modifications known as AMPylation and UMPylation. This chain is Protein nucleotidyltransferase YdiU, found in Maridesulfovibrio salexigens (strain ATCC 14822 / DSM 2638 / NCIMB 8403 / VKM B-1763) (Desulfovibrio salexigens).